A 365-amino-acid chain; its full sequence is Tetraacyldisaccharide 4'-kinase (365 aa).

68–75 (VVGGAGKT) lines the ATP pocket.

Belongs to the LpxK family.

The catalysed reaction is a lipid A disaccharide + ATP = a lipid IVA + ADP + H(+). It functions in the pathway glycolipid biosynthesis; lipid IV(A) biosynthesis; lipid IV(A) from (3R)-3-hydroxytetradecanoyl-[acyl-carrier-protein] and UDP-N-acetyl-alpha-D-glucosamine: step 6/6. Its function is as follows. Transfers the gamma-phosphate of ATP to the 4'-position of a tetraacyldisaccharide 1-phosphate intermediate (termed DS-1-P) to form tetraacyldisaccharide 1,4'-bis-phosphate (lipid IVA). The protein is Tetraacyldisaccharide 4'-kinase of Chlamydia pneumoniae (Chlamydophila pneumoniae).